The chain runs to 344 residues: Probable aldo-keto reductase 1 (344 aa).

The Proton donor role is filled by Y63. Position 130 (H130) interacts with substrate. 209-219 provides a ligand contact to NADP(+); it reads SPLGLGFFAAG.

The protein belongs to the aldo/keto reductase family.

This chain is Probable aldo-keto reductase 1, found in Arabidopsis thaliana (Mouse-ear cress).